The sequence spans 359 residues: Holliday junction branch migration complex subunit RuvB (359 aa).

Residues 1 to 187 (MSGLEHGDAS…FGFTAHLEFY (187 aa)) are large ATPase domain (RuvB-L). ATP-binding positions include Leu26, Arg27, Gly68, Lys71, Thr72, Thr73, 134–136 (EDY), Arg177, Tyr187, and Arg224. Residue Thr72 coordinates Mg(2+). A small ATPAse domain (RuvB-S) region spans residues 188–257 (ETHELEQVIE…SVRAALDLYD (70 aa)). A head domain (RuvB-H) region spans residues 260–359 (PLGLDRLDRA…VAGALFGDEL (100 aa)). Residues Arg315 and Arg320 each contribute to the DNA site.

It belongs to the RuvB family. As to quaternary structure, homohexamer. Forms an RuvA(8)-RuvB(12)-Holliday junction (HJ) complex. HJ DNA is sandwiched between 2 RuvA tetramers; dsDNA enters through RuvA and exits via RuvB. An RuvB hexamer assembles on each DNA strand where it exits the tetramer. Each RuvB hexamer is contacted by two RuvA subunits (via domain III) on 2 adjacent RuvB subunits; this complex drives branch migration. In the full resolvosome a probable DNA-RuvA(4)-RuvB(12)-RuvC(2) complex forms which resolves the HJ.

Its subcellular location is the cytoplasm. It carries out the reaction ATP + H2O = ADP + phosphate + H(+). Functionally, the RuvA-RuvB-RuvC complex processes Holliday junction (HJ) DNA during genetic recombination and DNA repair, while the RuvA-RuvB complex plays an important role in the rescue of blocked DNA replication forks via replication fork reversal (RFR). RuvA specifically binds to HJ cruciform DNA, conferring on it an open structure. The RuvB hexamer acts as an ATP-dependent pump, pulling dsDNA into and through the RuvAB complex. RuvB forms 2 homohexamers on either side of HJ DNA bound by 1 or 2 RuvA tetramers; 4 subunits per hexamer contact DNA at a time. Coordinated motions by a converter formed by DNA-disengaged RuvB subunits stimulates ATP hydrolysis and nucleotide exchange. Immobilization of the converter enables RuvB to convert the ATP-contained energy into a lever motion, pulling 2 nucleotides of DNA out of the RuvA tetramer per ATP hydrolyzed, thus driving DNA branch migration. The RuvB motors rotate together with the DNA substrate, which together with the progressing nucleotide cycle form the mechanistic basis for DNA recombination by continuous HJ branch migration. Branch migration allows RuvC to scan DNA until it finds its consensus sequence, where it cleaves and resolves cruciform DNA. In Clavibacter michiganensis subsp. michiganensis (strain NCPPB 382), this protein is Holliday junction branch migration complex subunit RuvB.